The sequence spans 417 residues: Phosphoglycerate kinase 1 (417 aa).

An N-acetylserine modification is found at Ser-2. A phosphoserine mark is found at Ser-2 and Ser-4. Position 6 is an N6-succinyllysine (Lys-6). Lys-11 bears the N6-acetyllysine mark. Val-23, Asp-24, Phe-25, Asn-26, Gln-38, and Arg-39 together coordinate (2R)-3-phosphoglycerate. Positions 38–43 are mitochondrial targeting region exposed following cis-trans isomerization by PIN1 and recognized by the TOM complex for mitochondrial translocation of the protein; it reads QRIKAA. Lys-48 carries the N6-acetyllysine; alternate modification. Position 48 is an N6-succinyllysine; alternate (Lys-48). 4 residues coordinate (2R)-3-phosphoglycerate: Ser-62, His-63, Gly-65, and Arg-66. Residue Lys-75 is modified to N6-acetyllysine. Tyr-76 carries the post-translational modification Phosphotyrosine. 2 positions are modified to N6-acetyllysine: Lys-86 and Lys-91. Lys-97 carries the post-translational modification N6-acetyllysine; alternate. Lys-97 bears the N6-(2-hydroxyisobutyryl)lysine; alternate mark. The (2R)-3-phosphoglycerate site is built by Leu-122 and Arg-123. The residue at position 131 (Lys-131) is an N6-acetyllysine; alternate. An N6-malonyllysine; alternate modification is found at Lys-131. The residue at position 146 (Lys-146) is an N6-acetyllysine. Residues His-170 and Arg-171 each coordinate (2R)-3-phosphoglycerate. N6-succinyllysine is present on Lys-191. Tyr-196 carries the post-translational modification Phosphotyrosine. An N6-acetyllysine modification is found at Lys-199. Ser-203 bears the Phosphoserine; by MAPK1 mark. An ADP-binding site is contributed by Gly-214. Gly-214 lines the CDP pocket. AMP contacts are provided by Ala-215 and Lys-216. Ala-215 lines the ATP pocket. Ala-215 serves as a coordination point for Mg(2+). Lys-216 is modified (N6-(2-hydroxyisobutyryl)lysine). Mg(2+) contacts are provided by Ala-218 and Asp-219. Asp-219 contributes to the CDP binding site. An AMP-binding site is contributed by Lys-220. Lys-220 is an ATP binding site. Lys-220 is modified (N6-(2-hydroxyisobutyryl)lysine). An ADP-binding site is contributed by Gly-238. Gly-238 provides a ligand contact to CDP. Gly-239 serves as a coordination point for AMP. ATP is bound at residue Gly-239. An N6-acetyllysine mark is found at Lys-267 and Lys-291. Gly-313 serves as a coordination point for AMP. Residue Gly-313 participates in ATP binding. Lys-323 is modified (N6-(2-hydroxyisobutyryl)lysine). Residues Gly-338, Val-340, and Phe-343 each coordinate CDP. An ADP-binding site is contributed by Phe-343. Glu-344 is a binding site for AMP. ATP is bound at residue Glu-344. N6-acetyllysine is present on Lys-361. Residues Asp-375 and Thr-376 each coordinate ATP. Residue Asp-375 coordinates Mg(2+).

It belongs to the phosphoglycerate kinase family. As to quaternary structure, monomer. Interacts with kinase MAPK1/ERK2; the interaction is direct, occurs under hypoxic conditions, and promotes its interaction with PIN1. Interacts with peptidyl-prolyl cis-trans isomerase PIN1; the interaction is direct, occurs under hypoxic conditions, and targets the protein to the mitochondrion by promoting interactions with the TOM complex. Interacts with mitochondrial circRNA mcPGK1 (via its 2nd stem-loop); the interaction is direct and targets the protein to the mitochondrion by promoting interactions with the TOM complex. Interacts with pyruvate dehydrogenase kinase PDK1; the interaction is direct, occurs under hypoxic conditions and leads to PDK1-mediated inhibition of pyruvate dehydrogenase complex activity. It depends on Mg(2+) as a cofactor. Phosphorylated at Ser-203 by MAPK1/ERK2 under hypoxic conditions, which promotes its mitochondrial targeting. As to expression, mainly expressed in spermatogonia. Localized on the principle piece in the sperm (at protein level). Expression significantly decreased in the testis of elderly men.

Its subcellular location is the cytoplasm. The protein localises to the cytosol. It localises to the mitochondrion matrix. It catalyses the reaction (2R)-3-phosphoglycerate + ATP = (2R)-3-phospho-glyceroyl phosphate + ADP. The catalysed reaction is L-seryl-[protein] + ATP = O-phospho-L-seryl-[protein] + ADP + H(+). It participates in carbohydrate degradation; glycolysis; pyruvate from D-glyceraldehyde 3-phosphate: step 2/5. Its activity is regulated as follows. Specifically inhibited by heterocyclic compound CBR-470-0. Catalyzes one of the two ATP producing reactions in the glycolytic pathway via the reversible conversion of 1,3-diphosphoglycerate to 3-phosphoglycerate. Both L- and D- forms of purine and pyrimidine nucleotides can be used as substrates, but the activity is much lower on pyrimidines. In addition to its role as a glycolytic enzyme, it seems that PGK1 acts as a polymerase alpha cofactor protein (primer recognition protein). Acts as a protein kinase when localized to the mitochondrion where it phosphorylates pyruvate dehydrogenase kinase PDK1 to inhibit pyruvate dehydrogenase complex activity and suppress the formation of acetyl-coenzyme A from pyruvate, and consequently inhibit oxidative phosphorylation and promote glycolysis. May play a role in sperm motility. This Homo sapiens (Human) protein is Phosphoglycerate kinase 1 (PGK1).